A 271-amino-acid chain; its full sequence is 2,3,4,5-tetrahydropyridine-2,6-dicarboxylate N-succinyltransferase (271 aa).

The protein belongs to the transferase hexapeptide repeat family.

It localises to the cytoplasm. The catalysed reaction is (S)-2,3,4,5-tetrahydrodipicolinate + succinyl-CoA + H2O = (S)-2-succinylamino-6-oxoheptanedioate + CoA. Its pathway is amino-acid biosynthesis; L-lysine biosynthesis via DAP pathway; LL-2,6-diaminopimelate from (S)-tetrahydrodipicolinate (succinylase route): step 1/3. This Coxiella burnetii (strain CbuG_Q212) (Coxiella burnetii (strain Q212)) protein is 2,3,4,5-tetrahydropyridine-2,6-dicarboxylate N-succinyltransferase.